Here is a 569-residue protein sequence, read N- to C-terminus: RNA demethylase ALKBH10B (569 aa).

The stretch at 118 to 151 forms a coiled coil; sequence QKVAAKKAEDLKQKKTEEEAEEDLKEVVATEEEE. Residues 164–190 form a disordered region; sequence ENDVNGDVEDVEDDSPTSDITDSGSHQ. Positions 167–179 are enriched in acidic residues; that stretch reads VNGDVEDVEDDSP. The span at 180–189 shows a compositional bias: polar residues; that stretch reads TSDITDSGSH. Fe cation-binding residues include H366, E368, and H421. R430 contributes to the 2-oxoglutarate binding site. Over residues 531 to 545 the composition is skewed to basic residues; that stretch reads KHVKHLPPRAQKKRL. A disordered region spans residues 531–569; that stretch reads KHVKHLPPRAQKKRLLPLPPAASSSPAGGSTSEPVITVG. The span at 551 to 560 shows a compositional bias: low complexity; sequence AASSSPAGGS.

This sequence belongs to the alkB family. Requires Fe(2+) as cofactor.

The enzyme catalyses an N(6)-methyladenosine in mRNA + 2-oxoglutarate + O2 = an adenosine in mRNA + formaldehyde + succinate + CO2. Its function is as follows. Dioxygenase that demethylates RNA by oxidative demethylation: specifically demethylates N(6)-methyladenosine (m6A) RNA, the most prevalent internal modification of messenger RNA (mRNA) in higher eukaryotes. ALKBH10B-mediated mRNA m6A demethylation stabilizes the mRNA of the key flowering time regulators FT, SPL3 and SPL9, which are involved in the control of floral transition. The protein is RNA demethylase ALKBH10B of Arabidopsis thaliana (Mouse-ear cress).